A 280-amino-acid polypeptide reads, in one-letter code: Phosphatidylserine decarboxylase proenzyme (280 aa).

Catalysis depends on charge relay system; for autoendoproteolytic cleavage activity residues D88, H145, and S248. S248 serves as the catalytic Schiff-base intermediate with substrate; via pyruvic acid; for decarboxylase activity. S248 carries the post-translational modification Pyruvic acid (Ser); by autocatalysis.

Belongs to the phosphatidylserine decarboxylase family. PSD-B subfamily. Prokaryotic type I sub-subfamily. As to quaternary structure, heterodimer of a large membrane-associated beta subunit and a small pyruvoyl-containing alpha subunit. Pyruvate serves as cofactor. In terms of processing, is synthesized initially as an inactive proenzyme. Formation of the active enzyme involves a self-maturation process in which the active site pyruvoyl group is generated from an internal serine residue via an autocatalytic post-translational modification. Two non-identical subunits are generated from the proenzyme in this reaction, and the pyruvate is formed at the N-terminus of the alpha chain, which is derived from the carboxyl end of the proenzyme. The autoendoproteolytic cleavage occurs by a canonical serine protease mechanism, in which the side chain hydroxyl group of the serine supplies its oxygen atom to form the C-terminus of the beta chain, while the remainder of the serine residue undergoes an oxidative deamination to produce ammonia and the pyruvoyl prosthetic group on the alpha chain. During this reaction, the Ser that is part of the protease active site of the proenzyme becomes the pyruvoyl prosthetic group, which constitutes an essential element of the active site of the mature decarboxylase.

The protein localises to the cell membrane. The enzyme catalyses a 1,2-diacyl-sn-glycero-3-phospho-L-serine + H(+) = a 1,2-diacyl-sn-glycero-3-phosphoethanolamine + CO2. It participates in phospholipid metabolism; phosphatidylethanolamine biosynthesis; phosphatidylethanolamine from CDP-diacylglycerol: step 2/2. Functionally, catalyzes the formation of phosphatidylethanolamine (PtdEtn) from phosphatidylserine (PtdSer). This is Phosphatidylserine decarboxylase proenzyme from Methylobacillus flagellatus (strain ATCC 51484 / DSM 6875 / VKM B-1610 / KT).